The chain runs to 806 residues: Transitional endoplasmic reticulum ATPase (806 aa).

S3 carries the phosphoserine modification. Residues P247 to L253, N348, H384, and G521 to L526 contribute to the ATP site. Disordered regions lie at residues R708–P727 and F768–G806. The segment covering F768 to Q778 has biased composition (low complexity). The segment covering G779–N794 has biased composition (gly residues).

Belongs to the AAA ATPase family. In terms of assembly, homohexamer.

Its subcellular location is the cytoplasm. The protein resides in the cytosol. It localises to the endoplasmic reticulum. It is found in the nucleus. The catalysed reaction is ATP + H2O = ADP + phosphate + H(+). Necessary for the fragmentation of Golgi stacks during mitosis and for their reassembly after mitosis. Involved in the formation of the nuclear envelope, and of the transitional endoplasmic reticulum (tER). The transfer of membranes from the endoplasmic reticulum to the Golgi apparatus occurs via 50-70 nm transition vesicles which derive from part-rough, part-smooth transitional elements of the endoplasmic reticulum (tER). Vesicle budding from the tER is an ATP-dependent process. Also involved in DNA damage response: recruited to double-strand breaks (DSBs) sites and promotes the recruitment of tp53bp1 at DNA damage sites. Together with sprtn metalloprotease, involved in the repair of covalent DNA-protein cross-links (DPCs) during DNA synthesis. Involved in interstrand cross-link repair in response to replication stress by mediating unloading of the ubiquitinated CMG helicase complex. Enhances cell cycle progression and inhibits apoptosis at low temperatures. Essential for the maturation of ubiquitin-containing autophagosomes and the clearance of ubiquitinated protein by autophagy. Acts as a negative regulator of type I interferon production by promoting ubiquitination of RIGI. May play a role in the ubiquitin-dependent sorting of membrane proteins to lysosomes where they undergo degradation. May more particularly play a role in caveolins sorting in cells. By controlling the steady-state expression of the IGF1R receptor, indirectly regulates the insulin-like growth factor receptor signaling pathway. The polypeptide is Transitional endoplasmic reticulum ATPase (Danio rerio (Zebrafish)).